The chain runs to 126 residues: Fluoride-specific ion channel FluC (126 aa).

4 consecutive transmembrane segments (helical) span residues 5–25 (VLAVSVGAVIGANLRWGLGLW), 35–55 (WGTLVANLSGGWLIGVLMAFF), 68–88 (FAVTGLCGALTTFSTFSLEMF), and 99–119 (ALVGILAHVVGSILMTALGFL). The Na(+) site is built by Gly75 and Thr78.

The protein belongs to the fluoride channel Fluc/FEX (TC 1.A.43) family.

The protein localises to the cell inner membrane. The catalysed reaction is fluoride(in) = fluoride(out). Its activity is regulated as follows. Na(+) is not transported, but it plays an essential structural role and its presence is essential for fluoride channel function. In terms of biological role, fluoride-specific ion channel. Important for reducing fluoride concentration in the cell, thus reducing its toxicity. The polypeptide is Fluoride-specific ion channel FluC (Marinobacter nauticus (strain ATCC 700491 / DSM 11845 / VT8) (Marinobacter aquaeolei)).